Consider the following 207-residue polypeptide: Small ribosomal subunit protein uS4 (207 aa).

Residues 31-53 are disordered; that stretch reads KAKFDSKPGQHGRTSGARTSDYG. The region spanning 97-157 is the S4 RNA-binding domain; it reads CRLDNVVYRM…EKSKKQARIV (61 aa).

This sequence belongs to the universal ribosomal protein uS4 family. In terms of assembly, part of the 30S ribosomal subunit. Contacts protein S5. The interaction surface between S4 and S5 is involved in control of translational fidelity.

Functionally, one of the primary rRNA binding proteins, it binds directly to 16S rRNA where it nucleates assembly of the body of the 30S subunit. Its function is as follows. With S5 and S12 plays an important role in translational accuracy. In Acidovorax ebreus (strain TPSY) (Diaphorobacter sp. (strain TPSY)), this protein is Small ribosomal subunit protein uS4.